The following is a 386-amino-acid chain: SWI/SNF-related matrix-associated actin-dependent regulator of chromatin subfamily B member 1 (386 aa).

Residues 1–114 (MMMMALSKTF…DEKYKAVSIS (114 aa)) form a DNA-binding region.

This sequence belongs to the SNF5 family. In terms of assembly, component of the multiprotein chromatin-remodeling complexes SWI/SNF. Component of neural progenitors-specific chromatin remodeling complex (npBAF complex) and the neuron-specific chromatin remodeling complex (nBAF complex). Component of the BAF (SWI/SNF) chromatin remodeling complex. Component of the SWI/SNF-B (PBAF) chromatin remodeling complex. Binds to double-stranded DNA.

Its subcellular location is the nucleus. Functionally, involved in chromatin-remodeling. Core component of the BAF (SWI/SNF) complex. This ATP-dependent chromatin-remodeling complex plays important roles in cell proliferation and differentiation, in cellular antiviral activities and inhibition of tumor formation. Belongs to the neural progenitors-specific chromatin remodeling complex (npBAF complex) and the neuron-specific chromatin remodeling complex (nBAF complex) and may play a role in neural development. The sequence is that of SWI/SNF-related matrix-associated actin-dependent regulator of chromatin subfamily B member 1 (SMARCB1) from Gallus gallus (Chicken).